We begin with the raw amino-acid sequence, 317 residues long: Ribosomal protein L11 methyltransferase (317 aa).

4 residues coordinate S-adenosyl-L-methionine: threonine 158, glycine 179, aspartate 201, and asparagine 244.

The protein belongs to the methyltransferase superfamily. PrmA family.

Its subcellular location is the cytoplasm. It catalyses the reaction L-lysyl-[protein] + 3 S-adenosyl-L-methionine = N(6),N(6),N(6)-trimethyl-L-lysyl-[protein] + 3 S-adenosyl-L-homocysteine + 3 H(+). In terms of biological role, methylates ribosomal protein L11. The protein is Ribosomal protein L11 methyltransferase of Streptococcus pyogenes serotype M18 (strain MGAS8232).